Consider the following 314-residue polypeptide: Tetraacyldisaccharide 4'-kinase (314 aa).

54–61 (YIGGTGKT) serves as a coordination point for ATP.

This sequence belongs to the LpxK family.

It catalyses the reaction a lipid A disaccharide + ATP = a lipid IVA + ADP + H(+). The protein operates within glycolipid biosynthesis; lipid IV(A) biosynthesis; lipid IV(A) from (3R)-3-hydroxytetradecanoyl-[acyl-carrier-protein] and UDP-N-acetyl-alpha-D-glucosamine: step 6/6. Functionally, transfers the gamma-phosphate of ATP to the 4'-position of a tetraacyldisaccharide 1-phosphate intermediate (termed DS-1-P) to form tetraacyldisaccharide 1,4'-bis-phosphate (lipid IVA). The chain is Tetraacyldisaccharide 4'-kinase from Pelagibacter ubique (strain HTCC1062).